The chain runs to 462 residues: Nitrogenase molybdenum-iron protein beta chain (462 aa).

4 residues coordinate [8Fe-7S] cluster: Cys21, Cys46, Cys104, and Ser145.

It belongs to the NifD/NifK/NifE/NifN family. Tetramer of two alpha and two beta chains. Forms complex with the iron protein (nitrogenase component 2). The cofactor is [8Fe-7S] cluster.

It carries out the reaction N2 + 8 reduced [2Fe-2S]-[ferredoxin] + 16 ATP + 16 H2O = H2 + 8 oxidized [2Fe-2S]-[ferredoxin] + 2 NH4(+) + 16 ADP + 16 phosphate + 6 H(+). In terms of biological role, this molybdenum-iron protein is part of the nitrogenase complex that catalyzes the key enzymatic reactions in nitrogen fixation. This chain is Nitrogenase molybdenum-iron protein beta chain (nifK), found in Methanococcus maripaludis (Methanococcus deltae).